Here is a 154-residue protein sequence, read N- to C-terminus: 6,7-dimethyl-8-ribityllumazine synthase (154 aa).

5-amino-6-(D-ribitylamino)uracil-binding positions include W23, 57 to 59, and 81 to 83; these read AFE and AVI. A (2S)-2-hydroxy-3-oxobutyl phosphate-binding site is contributed by 86-87; that stretch reads AT. The active-site Proton donor is H89. F114 serves as a coordination point for 5-amino-6-(D-ribitylamino)uracil. Position 128 (R128) interacts with (2S)-2-hydroxy-3-oxobutyl phosphate.

The protein belongs to the DMRL synthase family.

The catalysed reaction is (2S)-2-hydroxy-3-oxobutyl phosphate + 5-amino-6-(D-ribitylamino)uracil = 6,7-dimethyl-8-(1-D-ribityl)lumazine + phosphate + 2 H2O + H(+). It functions in the pathway cofactor biosynthesis; riboflavin biosynthesis; riboflavin from 2-hydroxy-3-oxobutyl phosphate and 5-amino-6-(D-ribitylamino)uracil: step 1/2. Functionally, catalyzes the formation of 6,7-dimethyl-8-ribityllumazine by condensation of 5-amino-6-(D-ribitylamino)uracil with 3,4-dihydroxy-2-butanone 4-phosphate. This is the penultimate step in the biosynthesis of riboflavin. In Sulfurimonas denitrificans (strain ATCC 33889 / DSM 1251) (Thiomicrospira denitrificans (strain ATCC 33889 / DSM 1251)), this protein is 6,7-dimethyl-8-ribityllumazine synthase.